Consider the following 294-residue polypeptide: Cytidine deaminase (294 aa).

CMP/dCMP-type deaminase domains are found at residues Thr-49–Ala-169 and Glu-188–Leu-294. Residue Asn-90–Glu-92 coordinates substrate. His-103 provides a ligand contact to Zn(2+). Residue Glu-105 is the Proton donor of the active site. 2 residues coordinate Zn(2+): Cys-130 and Cys-133.

This sequence belongs to the cytidine and deoxycytidylate deaminase family. In terms of assembly, homodimer. Requires Zn(2+) as cofactor.

It catalyses the reaction cytidine + H2O + H(+) = uridine + NH4(+). The catalysed reaction is 2'-deoxycytidine + H2O + H(+) = 2'-deoxyuridine + NH4(+). This enzyme scavenges exogenous and endogenous cytidine and 2'-deoxycytidine for UMP synthesis. This chain is Cytidine deaminase, found in Pasteurella multocida (strain Pm70).